The chain runs to 368 residues: RAB6-interacting golgin (368 aa).

3 disordered regions span residues 1–43 (MAQD…REKA), 55–133 (DGSA…DCKV), and 302–368 (KQMA…AVAT). Positions 11–27 (EELRRLKQNKDPFEPQR) are enriched in basic and acidic residues. The span at 80-89 (SPSPVAPSPL) shows a compositional bias: pro residues. A compositionally biased stretch (basic and acidic residues) spans 114 to 133 (NSHHGHKSAEVRAPKPDCKV). Residues 145–310 (RWEVLQQEQR…AKQMASVERL (166 aa)) are a coiled coil. Residues 188–368 (IQKELQALDD…AKNFSAAVAT (181 aa)) form a necessary for interaction with RCHY1 region.

The protein belongs to the GORAB family. Interacts with RCHY1. Interacts with SCYL1 and RAB6A/RAB6. Expressed in small intestine, kidney, skeletal muscle, lung, spleen, brain and heart. High expression is observed in osteoblasts and skin; also expressed in osteoclasts albeit at lower levels.

It localises to the cytoplasm. The protein localises to the golgi apparatus. The polypeptide is RAB6-interacting golgin (Gorab) (Mus musculus (Mouse)).